A 345-amino-acid polypeptide reads, in one-letter code: MDQRIIASSSTREDDAADASIRPKRLADYLGQQPVREQMEIYIQAAKARGEAMDHVLIFGPPGLGKTTLSHVIANELGVSLRVTSGPVIEKAGDLAALLTNLQPHDVLFIDEIHRLSPVVEEVLYPAMEDFQIDIMIGDGPAARSIKIDLPPFTLIGATTRAGLLTAPLRDRFGIVQRLEFYSPQELTRIVIRSAAILGIDCTPEGAAEIARRARGTPRIANRLLRRVRDYAQVKAAGHIDLPVAQAAMQMLKVDPEGFDELDRRMLRTIVEHFDGGPVGVESLAASLSEERGTLEDVIEPYLIQQGFLIRTARGRMVTTKAYLHLGLKPPRDRAPGIGEPGDLF.

A large ATPase domain (RuvB-L) region spans residues 1–182 (MDQRIIASSS…FGIVQRLEFY (182 aa)). Residues Ile21, Arg22, Gly63, Lys66, Thr67, Thr68, 129–131 (EDF), Arg172, Tyr182, and Arg219 contribute to the ATP site. Thr67 is a binding site for Mg(2+). The interval 183 to 253 (SPQELTRIVI…VAQAAMQMLK (71 aa)) is small ATPAse domain (RuvB-S). The segment at 256–345 (PEGFDELDRR…PGIGEPGDLF (90 aa)) is head domain (RuvB-H). Residues Arg292, Arg311, and Arg316 each contribute to the DNA site.

This sequence belongs to the RuvB family. In terms of assembly, homohexamer. Forms an RuvA(8)-RuvB(12)-Holliday junction (HJ) complex. HJ DNA is sandwiched between 2 RuvA tetramers; dsDNA enters through RuvA and exits via RuvB. An RuvB hexamer assembles on each DNA strand where it exits the tetramer. Each RuvB hexamer is contacted by two RuvA subunits (via domain III) on 2 adjacent RuvB subunits; this complex drives branch migration. In the full resolvosome a probable DNA-RuvA(4)-RuvB(12)-RuvC(2) complex forms which resolves the HJ.

Its subcellular location is the cytoplasm. It carries out the reaction ATP + H2O = ADP + phosphate + H(+). Its function is as follows. The RuvA-RuvB-RuvC complex processes Holliday junction (HJ) DNA during genetic recombination and DNA repair, while the RuvA-RuvB complex plays an important role in the rescue of blocked DNA replication forks via replication fork reversal (RFR). RuvA specifically binds to HJ cruciform DNA, conferring on it an open structure. The RuvB hexamer acts as an ATP-dependent pump, pulling dsDNA into and through the RuvAB complex. RuvB forms 2 homohexamers on either side of HJ DNA bound by 1 or 2 RuvA tetramers; 4 subunits per hexamer contact DNA at a time. Coordinated motions by a converter formed by DNA-disengaged RuvB subunits stimulates ATP hydrolysis and nucleotide exchange. Immobilization of the converter enables RuvB to convert the ATP-contained energy into a lever motion, pulling 2 nucleotides of DNA out of the RuvA tetramer per ATP hydrolyzed, thus driving DNA branch migration. The RuvB motors rotate together with the DNA substrate, which together with the progressing nucleotide cycle form the mechanistic basis for DNA recombination by continuous HJ branch migration. Branch migration allows RuvC to scan DNA until it finds its consensus sequence, where it cleaves and resolves cruciform DNA. In Xanthomonas oryzae pv. oryzae (strain MAFF 311018), this protein is Holliday junction branch migration complex subunit RuvB.